The chain runs to 186 residues: Ribulose bisphosphate carboxylase small subunit, chloroplastic 6 (186 aa).

A chloroplast-targeting transit peptide spans 1–60; that stretch reads MASSMLSNAAVATTAASRSAGAQASMVAPFTGLKSVSAFPVTRKSSNDLSTVPSNGGKVQ.

The protein belongs to the RuBisCO small chain family. As to quaternary structure, heterohexadecamer of 8 large and 8 small subunits.

It is found in the plastid. The protein resides in the chloroplast. Its function is as follows. RuBisCO catalyzes two reactions: the carboxylation of D-ribulose 1,5-bisphosphate, the primary event in carbon dioxide fixation, as well as the oxidative fragmentation of the pentose substrate. Both reactions occur simultaneously and in competition at the same active site. Although the small subunit is not catalytic it is essential for maximal activity. The protein is Ribulose bisphosphate carboxylase small subunit, chloroplastic 6 of Mesembryanthemum crystallinum (Common ice plant).